Consider the following 204-residue polypeptide: UPF0637 protein SaurJH9_1166 (204 aa).

The protein belongs to the UPF0637 family.

This Staphylococcus aureus (strain JH9) protein is UPF0637 protein SaurJH9_1166.